Consider the following 271-residue polypeptide: Glutamate racemase (271 aa).

Substrate-binding positions include 10–11 and 42–43; these read DS and YG. The Proton donor/acceptor role is filled by cysteine 74. Position 75–76 (75–76) interacts with substrate; it reads NT. Cysteine 189 acts as the Proton donor/acceptor in catalysis. 190-191 contributes to the substrate binding site; sequence TH.

The protein belongs to the aspartate/glutamate racemases family.

The enzyme catalyses L-glutamate = D-glutamate. The protein operates within cell wall biogenesis; peptidoglycan biosynthesis. In terms of biological role, provides the (R)-glutamate required for cell wall biosynthesis. This is Glutamate racemase from Bartonella bacilliformis (strain ATCC 35685 / KC583 / Herrer 020/F12,63).